The following is a 173-amino-acid chain: Shikimate kinase 2 (173 aa).

12–17 (GCGKTT) contacts ATP. 2 residues coordinate Mg(2+): Thr16 and Asp32. 3 residues coordinate substrate: Asp34, Arg58, and Gly79. The interval 112–126 (EENPQDNQRPTLTGR) is LID domain. Arg120 serves as a coordination point for ATP. Arg139 lines the substrate pocket. Gln155 contributes to the ATP binding site.

The protein belongs to the shikimate kinase family. AroL subfamily. In terms of assembly, monomer. Mg(2+) is required as a cofactor.

It localises to the cytoplasm. It carries out the reaction shikimate + ATP = 3-phosphoshikimate + ADP + H(+). Its pathway is metabolic intermediate biosynthesis; chorismate biosynthesis; chorismate from D-erythrose 4-phosphate and phosphoenolpyruvate: step 5/7. Catalyzes the specific phosphorylation of the 3-hydroxyl group of shikimic acid using ATP as a cosubstrate. The sequence is that of Shikimate kinase 2 from Pectobacterium carotovorum subsp. carotovorum (strain PC1).